Consider the following 479-residue polypeptide: UDP-N-acetylmuramate--L-alanine ligase (479 aa).

Position 126 to 132 (126 to 132 (GTHGKTT)) interacts with ATP.

It belongs to the MurCDEF family.

Its subcellular location is the cytoplasm. The enzyme catalyses UDP-N-acetyl-alpha-D-muramate + L-alanine + ATP = UDP-N-acetyl-alpha-D-muramoyl-L-alanine + ADP + phosphate + H(+). It participates in cell wall biogenesis; peptidoglycan biosynthesis. Its function is as follows. Cell wall formation. The protein is UDP-N-acetylmuramate--L-alanine ligase of Alkalilimnicola ehrlichii (strain ATCC BAA-1101 / DSM 17681 / MLHE-1).